We begin with the raw amino-acid sequence, 141 residues long: Large ribosomal subunit protein uL11 (141 aa).

The protein belongs to the universal ribosomal protein uL11 family. As to quaternary structure, part of the ribosomal stalk of the 50S ribosomal subunit. Interacts with L10 and the large rRNA to form the base of the stalk. L10 forms an elongated spine to which L12 dimers bind in a sequential fashion forming a multimeric L10(L12)X complex. In terms of processing, one or more lysine residues are methylated.

In terms of biological role, forms part of the ribosomal stalk which helps the ribosome interact with GTP-bound translation factors. This chain is Large ribosomal subunit protein uL11, found in Ruminiclostridium cellulolyticum (strain ATCC 35319 / DSM 5812 / JCM 6584 / H10) (Clostridium cellulolyticum).